The chain runs to 214 residues: Dynein axonemal assembly factor 6 (214 aa).

2 disordered regions span residues 1–22 (MESE…QNVD) and 34–68 (ALSK…NIGP).

It belongs to the PIH1 family. Interacts with HSPA1A/B and HSP90AA1. Interacts with DNAAF2 and DNAAF4. Interacts wuth DNAI2. In terms of tissue distribution, expressed in testis, small intestine, prostate, adrenal gland, spleen, lung, bladder, breast and ovary. Expressed in ciliated epithelial cells.

It is found in the cytoplasm. The protein resides in the golgi apparatus. It localises to the trans-Golgi network. In terms of biological role, plays a role in cytoplasmic pre-assembly of axonemal dynein. The polypeptide is Dynein axonemal assembly factor 6 (Homo sapiens (Human)).